A 210-amino-acid polypeptide reads, in one-letter code: Outer-membrane lipoprotein LolB (210 aa).

An N-terminal signal peptide occupies residues 1–19 (MNHLKSFFTALVAGFILTA). Residue cysteine 20 is the site of N-palmitoyl cysteine attachment. The S-diacylglycerol cysteine moiety is linked to residue cysteine 20.

This sequence belongs to the LolB family. Monomer.

Its subcellular location is the cell outer membrane. Functionally, plays a critical role in the incorporation of lipoproteins in the outer membrane after they are released by the LolA protein. This chain is Outer-membrane lipoprotein LolB, found in Mannheimia succiniciproducens (strain KCTC 0769BP / MBEL55E).